The primary structure comprises 147 residues: Large ribosomal subunit protein bL9 (147 aa).

This sequence belongs to the bacterial ribosomal protein bL9 family.

Its function is as follows. Binds to the 23S rRNA. The protein is Large ribosomal subunit protein bL9 of Campylobacter fetus subsp. fetus (strain 82-40).